A 346-amino-acid chain; its full sequence is Senescence-specific cysteine protease SAG12 (346 aa).

Positions 1-25 (MALKHMQIFLFVAIFSSFCFSITLS) are cleaved as a signal peptide. A glycan (N-linked (GlcNAc...) asparagine) is linked at asparagine 124. Intrachain disulfides connect cysteine 151–cysteine 192, cysteine 185–cysteine 225, and cysteine 283–cysteine 335. Cysteine 154 is an active-site residue. Residue histidine 289 is part of the active site. A glycan (N-linked (GlcNAc...) asparagine) is linked at asparagine 301. The active site involves asparagine 310.

It belongs to the peptidase C1 family. In terms of tissue distribution, found in senescent leaves, especially in senescence-associated vacuoles- (SAVs) containing cells (e.g. mesophyll and guard cells), and in senescencing ovules of unfertilised pistils.

Its subcellular location is the vacuole. Functionally, cysteine protease that may have a developmental senescence specific cell death function during apoptosis, heavy metal detoxification, and hypersensitive response. This is Senescence-specific cysteine protease SAG12 from Arabidopsis thaliana (Mouse-ear cress).